Reading from the N-terminus, the 78-residue chain is U7-lycotoxin-Ls1h (78 aa).

The first 22 residues, Met-1–Ala-22, serve as a signal peptide directing secretion. The propeptide occupies Gln-23 to Gly-26.

Belongs to the neurotoxin 19 (CSTX) family. 07 (U7-Lctx) subfamily. Post-translationally, contains 4 disulfide bonds. In terms of tissue distribution, expressed by the venom gland.

It is found in the secreted. The protein is U7-lycotoxin-Ls1h of Lycosa singoriensis (Wolf spider).